Consider the following 363-residue polypeptide: Spindle pole body component SPC42 (363 aa).

The stretch at 60–137 (EFINKAVQQN…ANSTFKEMRF (78 aa)) forms a coiled coil. The segment at 160-184 (PKHRAPDATGNPRTTNKVSNTSDQD) is disordered. A compositionally biased stretch (polar residues) spans 170–182 (NPRTTNKVSNTSD). A phosphoserine mark is found at Ser213, Ser217, Ser284, and Ser329. Positions 249–298 (DIMMYESAELKRVEEEIEELKRKILVRKKHDLRKLSLNNQLQELQSMMDG) form a coiled coil. The interval 310–363 (HNHATHRHSSQSSRDYSPSSDACLECSNDLYEKNRVKPENNMSETFATPTPNNR) is disordered. Over residues 319–329 (SQSSRDYSPSS) the composition is skewed to low complexity. A compositionally biased stretch (polar residues) spans 349–363 (NNMSETFATPTPNNR).

This sequence belongs to the SPC42 family. Component of the SPC110 complex containing at least CMD1, SPC29, SPC42 and SCP110.

It is found in the nucleus. Its subcellular location is the cytoplasm. The protein resides in the cytoskeleton. It localises to the microtubule organizing center. The protein localises to the spindle pole body. Its function is as follows. Forms a polymeric layer at the periphery of the spindle pole body (SPB) central plaque which has an essential function during SPB duplication and may facilitate attachment of the SPB to the nuclear membrane. This Saccharomyces cerevisiae (strain ATCC 204508 / S288c) (Baker's yeast) protein is Spindle pole body component SPC42 (SPC42).